Reading from the N-terminus, the 281-residue chain is NADH--cytochrome b5 reductase 1 (281 aa).

The helical transmembrane segment at 13–33 (ILLGVFVAFVAVGAGAAYFLT) threads the bilayer. Positions 34 to 40 (SSKKRRV) match the AKR2A-binding sequence (ABS) required for mitochondrion outer membrane targeting motif. The FAD-binding FR-type domain maps to 45–149 (ENFKEFKLVK…KGPKGRFKYQ (105 aa)). Residues 129 to 144 (REMRVGDHLAVKGPKG) and 155 to 187 (AFGMLAGGSGITPMFQVARAILENPTDKTKVHL) each bind FAD. Thr-166 carries the post-translational modification Phosphothreonine.

This sequence belongs to the flavoprotein pyridine nucleotide cytochrome reductase family. In terms of assembly, monomer. Interacts with AKR2A. The cofactor is FAD. Expressed in roots, stems, flowers and siliques. Detected in leaves.

It localises to the mitochondrion outer membrane. The catalysed reaction is 2 Fe(III)-[cytochrome b5] + NADH = 2 Fe(II)-[cytochrome b5] + NAD(+) + H(+). Reductase transferring electrons from NADH to cytochrome b5. Required for the NADH-dependent electron transfer involved in the desaturation and hydroxylation of fatty acids and in the desaturation of sterol precursors. No activity with NADPH as electron donor. In Arabidopsis thaliana (Mouse-ear cress), this protein is NADH--cytochrome b5 reductase 1.